The following is a 377-amino-acid chain: Actin-related protein T2 (377 aa).

It belongs to the actin family.

It is found in the cytoplasm. It localises to the cytoskeleton. The protein is Actin-related protein T2 (Actrt2) of Mus musculus (Mouse).